Consider the following 342-residue polypeptide: MITIDGSYGEGGGQILRTSIALSAITGEPVRIINIRANRPNPGLRPQHLHGILALKHLANADVKGAHVGSRELVFIPKRLEAKKVEVNIGTAGSITLVLQALLPAMAFAKNRVEFKITGGTDVPWSPPVDYLANVTLFALEKLGIMAGIKIVRRGHYPKGGGIIEGYVEPWKERRELVATKYSSIAKVEGISHATNLPAHVAERQAKAAKEELSKLEVPVKIKTEVSKSLGPGSGIVVWAETDCLRLGGDALGKRGKPAEVVGKEAAQELLEQLKPGYCVDKFLGDQLIPFLAFSGGEIWVSEVTNHLKTNIWVVENFLGKVFDLDGEVGKPGKVKVVRRVE.

ATP-binding positions include Q100 and 283 to 287 (FLGDQ). H307 acts as the Tele-AMP-histidine intermediate in catalysis.

This sequence belongs to the RNA 3'-terminal cyclase family. Type 1 subfamily.

The protein localises to the cytoplasm. It carries out the reaction a 3'-end 3'-phospho-ribonucleotide-RNA + ATP = a 3'-end 2',3'-cyclophospho-ribonucleotide-RNA + AMP + diphosphate. Functionally, catalyzes the conversion of 3'-phosphate to a 2',3'-cyclic phosphodiester at the end of RNA. The mechanism of action of the enzyme occurs in 3 steps: (A) adenylation of the enzyme by ATP; (B) transfer of adenylate to an RNA-N3'P to produce RNA-N3'PP5'A; (C) and attack of the adjacent 2'-hydroxyl on the 3'-phosphorus in the diester linkage to produce the cyclic end product. The biological role of this enzyme is unknown but it is likely to function in some aspects of cellular RNA processing. The polypeptide is RNA 3'-terminal phosphate cyclase (rtcA) (Pyrococcus abyssi (strain GE5 / Orsay)).